The chain runs to 189 residues: MRVMGVDPGLTRCGLSMVEGGHGRTVTALDVDVVRTPADMDLAHRLMLVADAAEYWMDTHRPGAVAIERVFAQHNVRTAMGTAQAGGVIALAAARRDIPVVFHTPSEVKAAVTGNGNADKAQVTAMVTRILGLQTAPKPADAADALALAICHCWRAPLLARMAAAEAKAAEAKRRYTERLAEQRKAVRG.

Catalysis depends on residues Asp-7, Glu-68, and Asp-141. Mg(2+)-binding residues include Asp-7, Glu-68, and Asp-141.

Belongs to the RuvC family. Homodimer which binds Holliday junction (HJ) DNA. The HJ becomes 2-fold symmetrical on binding to RuvC with unstacked arms; it has a different conformation from HJ DNA in complex with RuvA. In the full resolvosome a probable DNA-RuvA(4)-RuvB(12)-RuvC(2) complex forms which resolves the HJ. Mg(2+) serves as cofactor.

It is found in the cytoplasm. The catalysed reaction is Endonucleolytic cleavage at a junction such as a reciprocal single-stranded crossover between two homologous DNA duplexes (Holliday junction).. Its function is as follows. The RuvA-RuvB-RuvC complex processes Holliday junction (HJ) DNA during genetic recombination and DNA repair. Endonuclease that resolves HJ intermediates. Cleaves cruciform DNA by making single-stranded nicks across the HJ at symmetrical positions within the homologous arms, yielding a 5'-phosphate and a 3'-hydroxyl group; requires a central core of homology in the junction. The consensus cleavage sequence is 5'-(A/T)TT(C/G)-3'. Cleavage occurs on the 3'-side of the TT dinucleotide at the point of strand exchange. HJ branch migration catalyzed by RuvA-RuvB allows RuvC to scan DNA until it finds its consensus sequence, where it cleaves and resolves the cruciform DNA. In Nocardia farcinica (strain IFM 10152), this protein is Crossover junction endodeoxyribonuclease RuvC.